The chain runs to 258 residues: Indole-3-glycerol phosphate synthase (258 aa).

The protein belongs to the TrpC family.

It catalyses the reaction 1-(2-carboxyphenylamino)-1-deoxy-D-ribulose 5-phosphate + H(+) = (1S,2R)-1-C-(indol-3-yl)glycerol 3-phosphate + CO2 + H2O. Its pathway is amino-acid biosynthesis; L-tryptophan biosynthesis; L-tryptophan from chorismate: step 4/5. The chain is Indole-3-glycerol phosphate synthase from Exiguobacterium sibiricum (strain DSM 17290 / CCUG 55495 / CIP 109462 / JCM 13490 / 255-15).